Reading from the N-terminus, the 325-residue chain is 1-aminocyclopropane-1-carboxylate oxidase 2 (325 aa).

The Fe2OG dioxygenase domain occupies 157 to 257; that stretch reads PTFGTKVSNY…RMSIASFYNP (101 aa). 3 residues coordinate Fe cation: His-181, Asp-183, and His-238.

This sequence belongs to the iron/ascorbate-dependent oxidoreductase family. The cofactor is Fe cation.

It catalyses the reaction 1-aminocyclopropane-1-carboxylate + L-ascorbate + O2 = ethene + L-dehydroascorbate + hydrogen cyanide + CO2 + 2 H2O. The protein operates within alkene biosynthesis; ethylene biosynthesis via S-adenosyl-L-methionine; ethylene from S-adenosyl-L-methionine: step 2/2. The sequence is that of 1-aminocyclopropane-1-carboxylate oxidase 2 (ACO2) from Doritaenopsis sp. (Moth orchid).